Reading from the N-terminus, the 391-residue chain is 8-amino-7-oxononanoate synthase (391 aa).

A substrate-binding site is contributed by arginine 24. Residue 112-113 (GY) participates in pyridoxal 5'-phosphate binding. Histidine 137 lines the substrate pocket. Pyridoxal 5'-phosphate-binding residues include serine 183, histidine 211, and threonine 240. N6-(pyridoxal phosphate)lysine is present on lysine 243. A substrate-binding site is contributed by threonine 357.

It belongs to the class-II pyridoxal-phosphate-dependent aminotransferase family. BioF subfamily. In terms of assembly, homodimer. It depends on pyridoxal 5'-phosphate as a cofactor.

The catalysed reaction is 6-carboxyhexanoyl-[ACP] + L-alanine + H(+) = (8S)-8-amino-7-oxononanoate + holo-[ACP] + CO2. Its pathway is cofactor biosynthesis; biotin biosynthesis. Its function is as follows. Catalyzes the decarboxylative condensation of pimeloyl-[acyl-carrier protein] and L-alanine to produce 8-amino-7-oxononanoate (AON), [acyl-carrier protein], and carbon dioxide. This Alkalilimnicola ehrlichii (strain ATCC BAA-1101 / DSM 17681 / MLHE-1) protein is 8-amino-7-oxononanoate synthase.